The sequence spans 147 residues: Small ribosomal subunit protein uS12 (147 aa).

Belongs to the universal ribosomal protein uS12 family. In terms of assembly, part of the 30S ribosomal subunit.

With S4 and S5 plays an important role in translational accuracy. Located at the interface of the 30S and 50S subunits. The sequence is that of Small ribosomal subunit protein uS12 from Sulfurisphaera tokodaii (strain DSM 16993 / JCM 10545 / NBRC 100140 / 7) (Sulfolobus tokodaii).